A 2238-amino-acid chain; its full sequence is Golgin subfamily A member 4 (2238 aa).

The disordered stretch occupies residues 1–90; that stretch reads MFKKLKQKIS…QTFAQKLQLR (90 aa). The residue at position 10 (Ser-10) is a Phosphoserine. Residues 12-41 are compositionally biased toward low complexity; the sequence is EQQQLQQALAPAQASSSSSTPTRTRSRTSS. Thr-39 is subject to Phosphothreonine. Ser-41 is modified (phosphoserine). Composition is skewed to polar residues over residues 52-62 and 73-85; these read NRENASTQATK and SPSQ…TFAQ. A phosphoserine mark is found at Ser-93 and Ser-100. 3 disordered regions span residues 132-154, 1695-1744, and 1770-1789; these read AAAF…NSDG, LKER…SQDC, and LEQG…HRAL. The segment at 154 to 224 is interaction with MACF1; the sequence is GLSREQLLQR…EELQMDQQAK (71 aa). Residues 156–2161 adopt a coiled-coil conformation; the sequence is SREQLLQRLR…RYEKNACAAT (2006 aa). Basic and acidic residues predominate over residues 1695 to 1711; sequence LKEREKQVHSLEDKLKN. In terms of domain architecture, GRIP spans 2178–2225; it reads LFGEPTEFEYLRKVMFEYMMGRETKTMAKVITTVLKFPDDQAQKILER.

In terms of assembly, homodimer. Interacts with GTP-bound ARL1 and ARL3. Interacts with MACF1. Directly interacts with TBC1D23. Interacts with FAM91A1; this interaction may be mediated by TBC1D23. In terms of tissue distribution, ubiquitous. Highly expressed in oligodendrocyte precursors, particularly at a stage just prior to myelination.

It localises to the cytoplasm. It is found in the golgi apparatus membrane. The protein localises to the golgi apparatus. The protein resides in the trans-Golgi network membrane. In terms of biological role, involved in vesicular trafficking at the Golgi apparatus level. May play a role in delivery of transport vesicles containing GPI-linked proteins from the trans-Golgi network through its interaction with MACF1. Involved in endosome-to-Golgi trafficking. This is Golgin subfamily A member 4 (Golga4) from Mus musculus (Mouse).